Reading from the N-terminus, the 217-residue chain is Large ribosomal subunit protein uL3 (217 aa).

The protein belongs to the universal ribosomal protein uL3 family. Part of the 50S ribosomal subunit. Forms a cluster with proteins L14 and L19.

One of the primary rRNA binding proteins, it binds directly near the 3'-end of the 23S rRNA, where it nucleates assembly of the 50S subunit. The polypeptide is Large ribosomal subunit protein uL3 (Mycobacterium leprae (strain TN)).